The chain runs to 953 residues: Zinc finger protein 507 (953 aa).

Residue Ser-95 is modified to Phosphoserine. 3 C2H2-type zinc fingers span residues 125–147 (YQCSLCKFLSSSFSVLKDHIKQH), 155–185 (LMCSECHITSRSQEELEAHVVNDHDNDANIH), and 248–270 (YRCLFCSYTCGQQRMLKTHAWKH). The residue at position 427 (Ser-427) is a Phosphoserine. A disordered region spans residues 470-489 (KGLATDENAPPGRRRTNSES). 5 consecutive C2H2-type zinc fingers follow at residues 641-663 (YRCRLCHYTSGNKGYIKQHLRVH), 669-691 (YQCPICEHIADNSKDLESHMIHH), 697-720 (YQCKQCEESFHYKSQLRNHEREQH), 758-780 (YRCDVCDYTSTTYVGVRNHRRIH), and 786-808 (YRCSLCGYVCSHPPSLKSHMWKH). The segment at 831–888 (GRVLGKSPGKTQLKSSEESADPVTGSSENAVSSSELMSQTPSEVLGTNENEKLSPTSN) is disordered. Positions 854 to 888 (TGSSENAVSSSELMSQTPSEVLGTNENEKLSPTSN) are enriched in polar residues. Residues 911–933 (FCCCICGFESTSKENLLDHMKEH) form a C2H2-type 9 zinc finger.

Belongs to the krueppel C2H2-type zinc-finger protein family.

Its subcellular location is the nucleus. May be involved in transcriptional regulation. This chain is Zinc finger protein 507 (ZNF507), found in Homo sapiens (Human).